Consider the following 120-residue polypeptide: Ribonuclease P protein component (120 aa).

This sequence belongs to the RnpA family. As to quaternary structure, consists of a catalytic RNA component (M1 or rnpB) and a protein subunit.

It catalyses the reaction Endonucleolytic cleavage of RNA, removing 5'-extranucleotides from tRNA precursor.. RNaseP catalyzes the removal of the 5'-leader sequence from pre-tRNA to produce the mature 5'-terminus. It can also cleave other RNA substrates such as 4.5S RNA. The protein component plays an auxiliary but essential role in vivo by binding to the 5'-leader sequence and broadening the substrate specificity of the ribozyme. The protein is Ribonuclease P protein component of Latilactobacillus sakei subsp. sakei (strain 23K) (Lactobacillus sakei subsp. sakei).